We begin with the raw amino-acid sequence, 554 residues long: (S)-1-hydroxy-N-methylcanadine 13-hydroxylase CYP82X2 (554 aa).

The chain crosses the membrane as a helical span at residues 23-43 (IISTFIVTIISIVFLYTVLLI). Cys-494 lines the heme pocket.

This sequence belongs to the cytochrome P450 family. It depends on heme as a cofactor. Highly expressed in capsules. Expressed is stems.

It is found in the membrane. It carries out the reaction (S)-1-hydroxy-N-methylcanadine + reduced [NADPH--hemoprotein reductase] + O2 = (13S,14R)-1,13-dihydroxy-N-methylcanadine + oxidized [NADPH--hemoprotein reductase] + H2O + H(+). It functions in the pathway alkaloid biosynthesis. Cytochrome P450 involved in the biosynthesis of the benzylisoquinoline alkaloid noscapine. Converts (S)-1-hydroxy-N-methylcanadine to (13S,14R)-1,13-dihydroxy-N-methylcanadine. This is (S)-1-hydroxy-N-methylcanadine 13-hydroxylase CYP82X2 from Papaver somniferum (Opium poppy).